The primary structure comprises 625 residues: Sphingomyelin phosphodiesterase (625 aa).

The segment at 1–20 (MPRHGVSPGQGLPRSGREQA) is disordered. A signal peptide spans 1–40 (MPRHGVSPGQGLPRSGREQASDRSLGAPCLRLLWLGLALA). The Saposin B-type domain occupies 81-165 (WNLTCPTCKG…LLGSSCGHWD (85 aa)). N-linked (GlcNAc...) asparagine glycosylation occurs at N82. 3 disulfides stabilise this stretch: C85/C161, C88/C153, and C116/C127. The N-linked (GlcNAc...) asparagine glycan is linked to N171. Zn(2+) contacts are provided by D202 and H204. Cystine bridges form between C217/C222 and C223/C246. Zn(2+)-binding residues include D274 and N314. Residues N331 and N391 are each glycosylated (N-linked (GlcNAc...) asparagine). C381 and C427 form a disulfide bridge. Zn(2+) is bound by residues H421, H453, and H455. N499 carries an N-linked (GlcNAc...) asparagine glycan. A Phosphoserine modification is found at S504. An N-linked (GlcNAc...) asparagine glycan is attached at N516. 2 cysteine pairs are disulfide-bonded: C580–C584 and C590–C603.

This sequence belongs to the acid sphingomyelinase family. As to quaternary structure, monomer. Interacts with SORT1; the interaction is required for SMPD1 targeting to lysosomes. Zn(2+) is required as a cofactor. Proteolytically processed. Mature lysosomal form arises from C-terminal proteolytic processing of pro-sphingomyelin phosphodiesterase. Post-translationally, both lysosomal and secreted forms are glycosylated but they show a differential pattern of glycosylation. In terms of processing, phosphorylated at Ser-504 by PRKCD upon stress stimuli. Phosphorylation is required for secretion. This form is generated following cleavage by CASP7 in the extracellular milieu. It shows increased activity.

It localises to the lysosome. It is found in the lipid droplet. The protein resides in the secreted. The protein localises to the extracellular space. It carries out the reaction a sphingomyelin + H2O = phosphocholine + an N-acylsphing-4-enine + H(+). It catalyses the reaction N-(octadecanoyl)-sphing-4-enine-1-phosphocholine + H2O = N-octadecanoylsphing-4-enine + phosphocholine + H(+). The catalysed reaction is a 1,2-diacyl-sn-glycero-3-phosphocholine + H2O = phosphocholine + a 1,2-diacyl-sn-glycerol + H(+). The enzyme catalyses 1,2-dihexadecanoyl-sn-glycero-3-phosphocholine + H2O = 1,2-dihexadecanoyl-sn-glycerol + phosphocholine + H(+). With respect to regulation, hydrolysis of liposomal sphingomyelin is stimulated by incorporation of diacylglycerol (DAG), ceramide and free fatty acids into the liposomal membranes. Phosphatidylcholine hydrolysis is inhibited by incorporation of cholesterol, ceramide, DAG, monoacylglycerol and fatty acids. In terms of biological role, converts sphingomyelin to ceramide. Exists as two enzymatic forms that arise from alternative trafficking of a single protein precursor, one that is targeted to the endolysosomal compartment, whereas the other is released extracellularly. However, in response to various forms of stress, lysosomal exocytosis may represent a major source of the secretory form. Its function is as follows. In the lysosomes, converts sphingomyelin to ceramide. Plays an important role in the export of cholesterol from the intraendolysosomal membranes. Also has phospholipase C activities toward 1,2-diacylglycerolphosphocholine and 1,2-diacylglycerolphosphoglycerol. Modulates stress-induced apoptosis through the production of ceramide. Functionally, when secreted, modulates cell signaling with its ability to reorganize the plasma membrane by converting sphingomyelin to ceramide. Secreted form is increased in response to stress and inflammatory mediators such as IL1B, IFNG or TNF as well as upon infection with bacteria and viruses. Produces the release of ceramide in the outer leaflet of the plasma membrane playing a central role in host defense. Ceramide reorganizes these rafts into larger signaling platforms that are required to internalize bacteria, induce apoptosis and regulate the cytokine response in infected cells. In wounded cells, the lysosomal form is released extracellularly in the presence of Ca(2+) and promotes endocytosis and plasma membrane repair. This form is generated following cleavage by CASP7 in the extracellular milieu in response to bacterial infection. It shows increased ability to convert sphingomyelin to ceramide and promotes plasma membrane repair. Plasma membrane repair by ceramide counteracts the action of gasdermin-D (GSDMD) perforin (PRF1) pores that are formed in response to bacterial infection. This is Sphingomyelin phosphodiesterase (SMPD1) from Bos taurus (Bovine).